Here is a 472-residue protein sequence, read N- to C-terminus: 3-isopropylmalate dehydratase large subunit (472 aa).

[4Fe-4S] cluster-binding residues include Cys-347, Cys-407, and Cys-410.

Belongs to the aconitase/IPM isomerase family. LeuC type 1 subfamily. As to quaternary structure, heterodimer of LeuC and LeuD. It depends on [4Fe-4S] cluster as a cofactor.

The catalysed reaction is (2R,3S)-3-isopropylmalate = (2S)-2-isopropylmalate. It functions in the pathway amino-acid biosynthesis; L-leucine biosynthesis; L-leucine from 3-methyl-2-oxobutanoate: step 2/4. Functionally, catalyzes the isomerization between 2-isopropylmalate and 3-isopropylmalate, via the formation of 2-isopropylmaleate. The chain is 3-isopropylmalate dehydratase large subunit from Synechococcus sp. (strain CC9605).